Consider the following 314-residue polypeptide: Olfactory receptor 5B3 (314 aa).

The Extracellular portion of the chain corresponds to 1 to 23 (MENKTEVTQFILLGLTNDSELQV). Residues asparagine 3 and asparagine 17 are each glycosylated (N-linked (GlcNAc...) asparagine). The chain crosses the membrane as a helical span at residues 24–44 (PLFITFPFIYIITLVGNLGII). The Cytoplasmic segment spans residues 45–52 (VLIFWDSC). A helical membrane pass occupies residues 53 to 73 (LHNPMYFFLSNLSLVDFCYSS). The Extracellular portion of the chain corresponds to 74–97 (AVTPIVMAGFLIEDKVISYNACAA). Cysteine 95 and cysteine 187 form a disulfide bridge. The helical transmembrane segment at 98–118 (QMYIFVAFATVENYLLASMAY) threads the bilayer. Residues 119-131 (DRYAAVCKPLHYT) are Cytoplasmic-facing. Residues 132–152 (TTMTTTVCARLAIGSYLCGFL) form a helical membrane-spanning segment. An N-linked (GlcNAc...) asparagine glycan is attached at asparagine 153. The Extracellular portion of the chain corresponds to 153–194 (NASIHTGDTFSLSFCKSNEVHHFFCDIPAVMVLSCSDRHISE). The helical transmembrane segment at 195–215 (LVLIYVVSFNIFIALLVILIS) threads the bilayer. The Cytoplasmic portion of the chain corresponds to 216-235 (YTFIFITILKMHSASVYQKP). The chain crosses the membrane as a helical span at residues 236 to 256 (LSTCASHFIAVGIFYGTIIFM). Residues 257–269 (YLQPSSSHSMDTD) lie on the Extracellular side of the membrane. Residues 270–290 (KMAPVFYTMVIPMLNPLVYSL) form a helical membrane-spanning segment. At 291-314 (RNKEVKSAFKKVVEKAKLSVGWSV) the chain is on the cytoplasmic side.

Belongs to the G-protein coupled receptor 1 family.

It localises to the cell membrane. Functionally, odorant receptor. The polypeptide is Olfactory receptor 5B3 (OR5B3) (Homo sapiens (Human)).